The sequence spans 260 residues: Ribosomal RNA small subunit methyltransferase G (260 aa).

Residues Gly-94, Phe-99, 117–119 (DSS), 145–146 (AE), and Arg-164 each bind S-adenosyl-L-methionine.

The protein belongs to the methyltransferase superfamily. RNA methyltransferase RsmG family.

The protein localises to the cytoplasm. Functionally, specifically methylates the N7 position of a guanine in 16S rRNA. In Synechococcus sp. (strain JA-3-3Ab) (Cyanobacteria bacterium Yellowstone A-Prime), this protein is Ribosomal RNA small subunit methyltransferase G.